The primary structure comprises 94 residues: uncharacterized protein (94 aa).

The chain crosses the membrane as a helical span at residues 13–33; sequence IVICLTTIISVTIFYILVSFF.

It localises to the membrane. This is an uncharacterized protein from Dictyostelium discoideum (Social amoeba).